The sequence spans 335 residues: Probable G-protein coupled receptor 174 (335 aa).

Residues 1-27 are Extracellular-facing; it reads MTDNFTCNKTDGDNTDFRYFIYAVTYT. 2 N-linked (GlcNAc...) asparagine glycosylation sites follow: asparagine 4 and asparagine 8. Residues 28–48 form a helical membrane-spanning segment; sequence VILVPGLIGNILALWVFYGYM. Topologically, residues 49-53 are cytoplasmic; sequence KETKR. A helical membrane pass occupies residues 54–74; sequence AVVFMINLAIADLLQILSLPL. The Extracellular portion of the chain corresponds to 75–91; the sequence is RIFYYLNHDWPFGPGLC. Cysteines 91 and 168 form a disulfide. A helical transmembrane segment spans residues 92 to 112; it reads MFCFYLKYVNMYASIYFLVCI. The Cytoplasmic portion of the chain corresponds to 113-134; sequence SVRRFWFLMYPFRFNDCKQKYD. Residues 135-155 form a helical membrane-spanning segment; sequence LYISIIGWLIICLACLLFPLL. Topologically, residues 156-182 are extracellular; that stretch reads RTNDDTPGNRTKCFVDLPIRNVNLAQS. A glycan (N-linked (GlcNAc...) asparagine) is linked at asparagine 164. Residues 183-203 traverse the membrane as a helical segment; the sequence is VAMITIGEVVGFVTPLMIVLY. The Cytoplasmic portion of the chain corresponds to 204-231; that stretch reads CTWKTALSLQNKYPISQHLGEKKKALKM. A helical transmembrane segment spans residues 232–252; sequence ILTCAGVFLVCFVPYHFSFPL. Topologically, residues 253-268 are extracellular; it reads DFLVKSNEIKSCFARR. The chain crosses the membrane as a helical span at residues 269-289; it reads VILIFHSVALCLASLNSCLDP. Residues 290–335 are Cytoplasmic-facing; the sequence is VIYYFTTNEFRRRLSRQDLPDNIQLHTKSYKIASNHATSTVAAELC.

Belongs to the G-protein coupled receptor 1 family. As to quaternary structure, interacts with GNA13. Interacts with CCL21. In terms of tissue distribution, expressed in spleen and, at low levels, in brain. Highly expressed in developing and mature regulatory T-cells.

It is found in the cell membrane. G-protein-coupled receptor of lysophosphatidylserine (LysoPS) that plays different roles in immune response. Plays a negative role in regulatory T-cell accumulation and homeostasis. Under inflammatory conditions where LysoPS production increases, contributes to the down-regulation of regulatory T-cell activity to favor effector response. Mediates the suppression of IL-2 production in activated T-lymphocytes leading to inhibition of growth, proliferation and differentiation of T-cells. Mechanistically, acts via G(s)-containing heterotrimeric G proteins to trigger elevated cyclic AMP levels and protein kinase A/PKA activity, which may in turn act to antagonize proximal TCR signaling. Plays an important role in the initial period of sepsis through the regulation of macrophage polarization and pro- and anti-inflammatory cytokine secretions. Upon testosterone treatment, acts as a receptor for CCL21 and subsequently triggers through G(q)-alpha and G(12)/G(13) proteins a calcium flux leading to chemotactic effects on activated B-cells. Signals via GNA13 and PKA to promote CD86 up-regulation by follicular B-cells. The protein is Probable G-protein coupled receptor 174 (Gpr174) of Mus musculus (Mouse).